A 145-amino-acid polypeptide reads, in one-letter code: Mannitol-specific phosphotransferase enzyme IIA component (145 aa).

The PTS EIIA type-2 domain occupies 2–145 (ENLTNISIEL…EEITENLAIA (144 aa)). Histidine 62 serves as the catalytic Tele-phosphohistidine intermediate. Histidine 62 carries the phosphohistidine; by HPr modification.

It localises to the cytoplasm. Functionally, the phosphoenolpyruvate-dependent sugar phosphotransferase system (sugar PTS), a major carbohydrate active transport system, catalyzes the phosphorylation of incoming sugar substrates concomitantly with their translocation across the cell membrane. The enzyme II CmtAB PTS system is involved in D-mannitol transport. In Enterococcus faecalis (strain ATCC 700802 / V583), this protein is Mannitol-specific phosphotransferase enzyme IIA component.